Reading from the N-terminus, the 793-residue chain is Copalyl diphosphate synthase CPS1, chloroplastic (793 aa).

The transit peptide at 1–59 (MASLSSTILSRSPAARRRITPASAKLHRPECFATSAWMGSSSKNLSLSYQLNHKKISVA) directs the protein to the chloroplast. Lysine 238 is a binding site for substrate. Aspartate 370 and aspartate 372 together coordinate Mg(2+). The DXDD motif signature appears at 370 to 373 (DIDD). Lysine 457 contacts substrate.

The protein belongs to the terpene synthase family. Mg(2+) is required as a cofactor.

Its subcellular location is the plastid. The protein localises to the chloroplast. It carries out the reaction (2E,6E,10E)-geranylgeranyl diphosphate = (+)-copalyl diphosphate. Its pathway is secondary metabolite biosynthesis; terpenoid biosynthesis. In terms of biological role, involved in tanshinone biosynthesis in hairy roots. Catalyzes the conversion of geranylgeranyl diphosphate (GGPP) to copalyl diphosphate (CPP). This chain is Copalyl diphosphate synthase CPS1, chloroplastic, found in Salvia miltiorrhiza (Chinese sage).